The chain runs to 353 residues: Photosystem II protein D1 (353 aa).

Threonine 2 carries the post-translational modification N-acetylthreonine. A Phosphothreonine modification is found at threonine 2. The next 3 membrane-spanning stretches (helical) occupy residues tyrosine 29–serine 46, histidine 118–leucine 133, and tryptophan 142–alanine 156. Histidine 118 lines the chlorophyll a pocket. Position 126 (tyrosine 126) interacts with pheophytin a. [CaMn4O5] cluster-binding residues include aspartate 170 and glutamate 189. Residues phenylalanine 197–leucine 218 traverse the membrane as a helical segment. Chlorophyll a is bound at residue histidine 198. A quinone-binding positions include histidine 215 and serine 264–phenylalanine 265. Position 215 (histidine 215) interacts with Fe cation. Histidine 272 contacts Fe cation. A helical transmembrane segment spans residues phenylalanine 274–leucine 288. [CaMn4O5] cluster contacts are provided by histidine 332, glutamate 333, aspartate 342, and alanine 344. A propeptide spanning residues serine 345–glycine 353 is cleaved from the precursor.

It belongs to the reaction center PufL/M/PsbA/D family. As to quaternary structure, PSII is composed of 1 copy each of membrane proteins PsbA, PsbB, PsbC, PsbD, PsbE, PsbF, PsbH, PsbI, PsbJ, PsbK, PsbL, PsbM, PsbT, PsbX, PsbY, PsbZ, Psb30/Ycf12, at least 3 peripheral proteins of the oxygen-evolving complex and a large number of cofactors. It forms dimeric complexes. It depends on The D1/D2 heterodimer binds P680, chlorophylls that are the primary electron donor of PSII, and subsequent electron acceptors. It shares a non-heme iron and each subunit binds pheophytin, quinone, additional chlorophylls, carotenoids and lipids. D1 provides most of the ligands for the Mn4-Ca-O5 cluster of the oxygen-evolving complex (OEC). There is also a Cl(-1) ion associated with D1 and D2, which is required for oxygen evolution. The PSII complex binds additional chlorophylls, carotenoids and specific lipids. as a cofactor. Post-translationally, tyr-161 forms a radical intermediate that is referred to as redox-active TyrZ, YZ or Y-Z. In terms of processing, C-terminally processed by CTPA; processing is essential to allow assembly of the oxygen-evolving complex and thus photosynthetic growth.

Its subcellular location is the plastid. The protein resides in the chloroplast thylakoid membrane. The catalysed reaction is 2 a plastoquinone + 4 hnu + 2 H2O = 2 a plastoquinol + O2. In terms of biological role, photosystem II (PSII) is a light-driven water:plastoquinone oxidoreductase that uses light energy to abstract electrons from H(2)O, generating O(2) and a proton gradient subsequently used for ATP formation. It consists of a core antenna complex that captures photons, and an electron transfer chain that converts photonic excitation into a charge separation. The D1/D2 (PsbA/PsbD) reaction center heterodimer binds P680, the primary electron donor of PSII as well as several subsequent electron acceptors. The protein is Photosystem II protein D1 of Adiantum capillus-veneris (Maidenhair fern).